Here is a 37-residue protein sequence, read N- to C-terminus: ACNTATCVTHRLADFLSRSGGMAKNNFVPTNVGSKAF.

A disulfide bond links Cys-2 and Cys-7. Phe-37 bears the Phenylalanine amide mark.

The protein belongs to the calcitonin family.

Its function is as follows. CGRP induces vasodilation. It dilates a variety of vessels including the coronary, cerebral and systemic vasculature. Its abundance in the CNS also points toward a neurotransmitter or neuromodulator role. This Pelophylax ridibundus (Marsh frog) protein is Calcitonin gene-related peptide.